The chain runs to 548 residues: Probable 2,3-bisphosphoglycerate-independent phosphoglycerate mutase (548 aa).

The Mn(2+) site is built by D20 and S73. Residue S73 is the Phosphoserine intermediate of the active site. Residues H134, 164 to 165 (RD), R200, R207, 279 to 282 (RGDR), and K354 contribute to the substrate site. The Mn(2+) site is built by D422, H426, D463, H464, and H493.

The protein belongs to the BPG-independent phosphoglycerate mutase family. In terms of assembly, monomer. Mn(2+) serves as cofactor.

The enzyme catalyses (2R)-2-phosphoglycerate = (2R)-3-phosphoglycerate. Its pathway is carbohydrate degradation; glycolysis; pyruvate from D-glyceraldehyde 3-phosphate: step 3/5. Its function is as follows. Catalyzes the interconversion of 2-phosphoglycerate and 3-phosphoglycerate. This chain is Probable 2,3-bisphosphoglycerate-independent phosphoglycerate mutase (gpmI), found in Leptospira interrogans serogroup Icterohaemorrhagiae serovar copenhageni (strain Fiocruz L1-130).